Consider the following 218-residue polypeptide: Large ribosomal subunit protein uL3 (218 aa).

Residues 126–170 (HGFSRGPMSHGSKNHREPGSTGAGTTPGRIYPGKRMAGRYGGKKR) form a disordered region.

The protein belongs to the universal ribosomal protein uL3 family. In terms of assembly, part of the 50S ribosomal subunit. Forms a cluster with proteins L14 and L19.

Its function is as follows. One of the primary rRNA binding proteins, it binds directly near the 3'-end of the 23S rRNA, where it nucleates assembly of the 50S subunit. The protein is Large ribosomal subunit protein uL3 of Prochlorococcus marinus (strain MIT 9313).